Here is a 187-residue protein sequence, read N- to C-terminus: Dihydrofolate reductase (187 aa).

The 182-residue stretch at 4 to 185 folds into the DHFR domain; it reads PLNCIVAVSQ…IKYKFEVYEK (182 aa). NADP(+) contacts are provided by residues Ala-10 and 16–22; that span reads GIGKNGD. 31 to 36 is a binding site for substrate; the sequence is EFKYFQ. Lys-33 carries the N6-acetyllysine; alternate modification. An N6-succinyllysine; alternate modification is found at Lys-33. An NADP(+)-binding site is contributed by 55 to 57; that stretch reads RKT. Arg-71 contributes to the substrate binding site. Residues 77-79 and 117-124 contribute to the NADP(+) site; these read SRE and GGSSVYQE.

Belongs to the dihydrofolate reductase family. As to quaternary structure, homodimer.

It localises to the mitochondrion. The protein resides in the cytoplasm. It catalyses the reaction (6S)-5,6,7,8-tetrahydrofolate + NADP(+) = 7,8-dihydrofolate + NADPH + H(+). Its pathway is cofactor biosynthesis; tetrahydrofolate biosynthesis; 5,6,7,8-tetrahydrofolate from 7,8-dihydrofolate: step 1/1. In terms of biological role, key enzyme in folate metabolism. Contributes to the de novo mitochondrial thymidylate biosynthesis pathway. Catalyzes an essential reaction for de novo glycine and purine synthesis, and for DNA precursor synthesis. Binds its own mRNA. The polypeptide is Dihydrofolate reductase (Dhfr) (Rattus norvegicus (Rat)).